The primary structure comprises 91 residues: uncharacterized protein (91 aa).

It belongs to the FrmR/RcnR family.

The protein resides in the cytoplasm. This is an uncharacterized protein from Serratia marcescens.